The sequence spans 105 residues: Cell division protein FtsB (105 aa).

Over 1–3 (MRL) the chain is Cytoplasmic. Residues 4-21 (FTLILMVVLALVQRQLWF) traverse the membrane as a helical segment. Topologically, residues 22–105 (GKNGLVEYRQ…NKQSSLPKSD (84 aa)) are periplasmic. Residues 28-74 (EYRQVSENLLRRQADNQKLQERNMLLKEDIEDLKSGLEAIEELARND) are a coiled coil.

This sequence belongs to the FtsB family. As to quaternary structure, part of a complex composed of FtsB, FtsL and FtsQ.

The protein localises to the cell inner membrane. Its function is as follows. Essential cell division protein. May link together the upstream cell division proteins, which are predominantly cytoplasmic, with the downstream cell division proteins, which are predominantly periplasmic. This Tolumonas auensis (strain DSM 9187 / NBRC 110442 / TA 4) protein is Cell division protein FtsB.